Consider the following 649-residue polypeptide: V-type ATP synthase subunit I (649 aa).

A run of 7 helical transmembrane segments spans residues 312 to 332 (FLSF…GLIF), 360 to 380 (FMIL…FFGV), 455 to 475 (DNIL…LGML), 485 to 505 (IGWV…LQAV), 520 to 540 (GQVG…GGII), 556 to 576 (VFSD…GAMV), and 593 to 613 (VLII…GGVI).

The protein belongs to the V-ATPase 116 kDa subunit family.

The protein resides in the cell membrane. Its function is as follows. Produces ATP from ADP in the presence of a proton gradient across the membrane. This chain is V-type ATP synthase subunit I (atpI), found in Chlamydia muridarum (strain MoPn / Nigg).